Reading from the N-terminus, the 195-residue chain is MEAFTIHTGRAVPLRRSDVDTDQIIPSEWLKRIERTGFGAGLFSEWRADEGFVLNNPAYAEASILIAGPDFGTGSSREHAVWALQDYGFRAVISPRFADIFRGNALGNGLLPVQLPAETVETLQTAAEQDPSVEITVDLAAREVRGAGLVAPFELDDFTRWRLMEGLDDVGLTLRHEELITGFEATRPAWLPSAV.

It belongs to the LeuD family. LeuD type 1 subfamily. In terms of assembly, heterodimer of LeuC and LeuD.

It carries out the reaction (2R,3S)-3-isopropylmalate = (2S)-2-isopropylmalate. Its pathway is amino-acid biosynthesis; L-leucine biosynthesis; L-leucine from 3-methyl-2-oxobutanoate: step 2/4. Functionally, catalyzes the isomerization between 2-isopropylmalate and 3-isopropylmalate, via the formation of 2-isopropylmaleate. In Frankia alni (strain DSM 45986 / CECT 9034 / ACN14a), this protein is 3-isopropylmalate dehydratase small subunit.